We begin with the raw amino-acid sequence, 351 residues long: N-acetyl-gamma-glutamyl-phosphate reductase (351 aa).

Residue Cys-154 is part of the active site.

The protein belongs to the NAGSA dehydrogenase family. Type 1 subfamily.

Its subcellular location is the cytoplasm. It carries out the reaction N-acetyl-L-glutamate 5-semialdehyde + phosphate + NADP(+) = N-acetyl-L-glutamyl 5-phosphate + NADPH + H(+). Its pathway is amino-acid biosynthesis; L-arginine biosynthesis; N(2)-acetyl-L-ornithine from L-glutamate: step 3/4. In terms of biological role, catalyzes the NADPH-dependent reduction of N-acetyl-5-glutamyl phosphate to yield N-acetyl-L-glutamate 5-semialdehyde. The sequence is that of N-acetyl-gamma-glutamyl-phosphate reductase from Synechocystis sp. (strain ATCC 27184 / PCC 6803 / Kazusa).